The sequence spans 154 residues: Nuclear cap-binding protein subunit 2 (154 aa).

MRNA contacts are provided by residues Tyr-10, Tyr-33, 102 to 106 (RVDWD), 113 to 117 (RQYGR), and 123 to 124 (QV). Residues 30 to 108 (CTLYVGNLSF…RLIRVDWDAG (79 aa)) form the RRM domain.

Belongs to the RRM NCBP2 family. In terms of assembly, component of the nuclear cap-binding complex (CBC), a heterodimer composed of Cbp80 and Cbp20 that interacts with m7GpppG-capped RNA. Interacts with Ars2.

Its subcellular location is the nucleus. Functionally, component of the cap-binding complex (CBC), which binds co-transcriptionally to the 5' cap of pre-mRNAs and is involved in various processes such as pre-mRNA splicing and RNA-mediated gene silencing (RNAi). The CBC complex is involved in miRNA-mediated RNA interference via its interaction with Ars2 and is required for primary microRNAs (miRNAs) processing. Also involved in innate immunity via the short interfering RNAs (siRNAs) processing machinery by restricting the viral RNA production. In the CBC complex, Cbp20 recognizes and binds capped RNAs (m7GpppG-capped RNA) but requires Cbp80 to stabilize the movement of its N-terminal loop and lock the CBC into a high affinity cap-binding state with the cap structure. In Drosophila yakuba (Fruit fly), this protein is Nuclear cap-binding protein subunit 2 (Cbp20).